A 177-amino-acid chain; its full sequence is MSRIGKKPVDLPAGVSASVSGQTIEIKGPKGTRAFKATDDVTLTVEDNVVTVTPRGKSKRARQQWGMSRTMVANLVTGVSEGFKKELEIQGVGYRAAMTGNTLKLNLGLSHDVDYTPPAGVTVTAPKQTEIVVEGIDEQLVGQVAANIRQWRKPEPYKGKGIRYKGEFVFRKEGKKK.

Belongs to the universal ribosomal protein uL6 family. Part of the 50S ribosomal subunit.

Its function is as follows. This protein binds to the 23S rRNA, and is important in its secondary structure. It is located near the subunit interface in the base of the L7/L12 stalk, and near the tRNA binding site of the peptidyltransferase center. This is Large ribosomal subunit protein uL6 from Roseobacter denitrificans (strain ATCC 33942 / OCh 114) (Erythrobacter sp. (strain OCh 114)).